A 577-amino-acid polypeptide reads, in one-letter code: Arginine--tRNA ligase (577 aa).

A 'HIGH' region motif is present at residues 122-132 (PNVAKEMHVGH).

Belongs to the class-I aminoacyl-tRNA synthetase family. As to quaternary structure, monomer.

The protein localises to the cytoplasm. The catalysed reaction is tRNA(Arg) + L-arginine + ATP = L-arginyl-tRNA(Arg) + AMP + diphosphate. This is Arginine--tRNA ligase from Salmonella schwarzengrund (strain CVM19633).